The chain runs to 468 residues: 55 kDa erythrocyte membrane protein (468 aa).

The region spanning 73 to 154 (LVQFEKVTEE…MVSIKVIPNQ (82 aa)) is the PDZ domain. Residues 160–230 (ALQMFMRAQF…PSPELQEWRV (71 aa)) form the SH3 domain. In terms of domain architecture, Guanylate kinase-like spans 284-453 (RKTLVLIGAS…SLKLLEEAFE (170 aa)).

This sequence belongs to the MAGUK family.

The protein resides in the membrane. It is found in the cell projection. The protein localises to the stereocilium. In terms of biological role, may play a role in the regulation of neutrophil polarization. The sequence is that of 55 kDa erythrocyte membrane protein (MPP1) from Gallus gallus (Chicken).